We begin with the raw amino-acid sequence, 414 residues long: Esterase FrsA (414 aa).

Belongs to the FrsA family.

It carries out the reaction a carboxylic ester + H2O = an alcohol + a carboxylate + H(+). Its function is as follows. Catalyzes the hydrolysis of esters. The chain is Esterase FrsA from Escherichia coli O8 (strain IAI1).